Here is a 245-residue protein sequence, read N- to C-terminus: Carboxymethylenebutenolidase homolog (245 aa).

Position 2 is an N-acetylalanine (alanine 2). Active-site residues include cysteine 132, aspartate 179, and histidine 212. Residue serine 223 is modified to Phosphoserine.

It belongs to the dienelactone hydrolase family.

The protein resides in the cytoplasm. It is found in the cytosol. Its function is as follows. Cysteine hydrolase. In Mus musculus (Mouse), this protein is Carboxymethylenebutenolidase homolog (Cmbl).